Reading from the N-terminus, the 621-residue chain is Chaperone protein HscA homolog (621 aa).

It belongs to the heat shock protein 70 family.

Chaperone involved in the maturation of iron-sulfur cluster-containing proteins. Has a low intrinsic ATPase activity which is markedly stimulated by HscB. This chain is Chaperone protein HscA homolog, found in Azotobacter vinelandii (strain DJ / ATCC BAA-1303).